We begin with the raw amino-acid sequence, 780 residues long: Gelsolin (780 aa).

The signal sequence occupies residues 1–25; the sequence is MAPYCSSLRSALLVLALCALSPSHA. The tract at residues 28–48 is disordered; sequence ASRGRAQERAPQSRVSETRPS. The segment at 51-174 is actin-severing; sequence VVEHPEFLKA…YKKGGVASGF (124 aa). Residues 74–155 form a Gelsolin-like 1 repeat; sequence FDLVPVPPNL…EVQGFESSTF (82 aa). Tyr-84 carries the post-translational modification Phosphotyrosine. Ca(2+)-binding residues include Gly-90, Asp-91, Glu-122, Asp-134, Gly-139, and Ala-141. The interval 121–124 is actin-actin interfilament contact point; the sequence is DESG. 160–167 contacts a 1,2-diacyl-sn-glycero-3-phospho-(1D-myo-inositol-4,5-bisphosphate); that stretch reads KSGLKYKK. Residue Val-170 coordinates Ca(2+). 186–194 lines the a 1,2-diacyl-sn-glycero-3-phospho-(1D-myo-inositol-4,5-bisphosphate) pocket; the sequence is RLFQVKGRR. The stretch at 196–268 is one Gelsolin-like 2 repeat; the sequence is VRATEVPVSW…SEEGSEPEAM (73 aa). 2 residues coordinate Ca(2+): Gly-211 and Asp-212. An intrachain disulfide couples Cys-213 to Cys-226. Ca(2+) contacts are provided by Glu-234, Asp-284, Glu-327, Asp-328, and Glu-352. The disordered stretch occupies residues 244–286; that stretch reads GIRDNERSGRAQVHVSEEGSEPEAMLQVLGPKPDLPQGTEDTA. The stretch at 315–387 is one Gelsolin-like 3 repeat; sequence DENPFAQSAL…LPEGGETPLF (73 aa). Tyr-407 and Tyr-463 each carry phosphotyrosine. The interval 432–780 is actin-binding, Ca-sensitive; sequence AAQHGMDDDG…LDRALAELAA (349 aa). Residues 453-534 form a Gelsolin-like 4 repeat; that stretch reads SNKVLVDPAT…VQGKEPAHLM (82 aa). Ca(2+) contacts are provided by Gly-469, Asp-470, Glu-500, Asp-512, Gly-517, Pro-519, and Thr-549. The Gelsolin-like 5 repeat unit spans residues 576–640; the sequence is AVEVMPKAGA…EEGSEPDGFW (65 aa). An N6-acetyllysine modification is found at Lys-582. Asn-589 and Asp-590 together coordinate Ca(2+). Tyr-601 bears the Phosphotyrosine mark. Glu-612 lines the Ca(2+) pocket. Residue Tyr-649 is modified to Phosphotyrosine. The Gelsolin-like 6 repeat unit spans residues 679–754; it reads IEEVPGELMQ…VRQGFEPPSF (76 aa). Asp-694, Asp-695, and Glu-717 together coordinate Ca(2+). At Thr-740 the chain carries Phosphothreonine.

It belongs to the villin/gelsolin family. As to quaternary structure, binds to actin and to fibronectin. Identified in a complex composed of ACTA1, COBL, GSN and TMSB4X. Interacts with the inactive form of EIF2AK2/PKR. Interacts with FLII. Phosphorylated on tyrosine residues in vitro.

The protein resides in the secreted. It is found in the cytoplasm. The protein localises to the cytoskeleton. In terms of biological role, calcium-regulated, actin-modulating protein that binds to the plus (or barbed) ends of actin monomers or filaments, preventing monomer exchange (end-blocking or capping). It can promote the assembly of monomers into filaments (nucleation) as well as sever filaments already formed. Plays a role in ciliogenesis. This is Gelsolin (Gsn) from Rattus norvegicus (Rat).